The primary structure comprises 228 residues: Cytidylate kinase (228 aa).

Residue 11 to 19 coordinates ATP; that stretch reads GPAGTGKSS.

It belongs to the cytidylate kinase family. Type 1 subfamily.

The protein resides in the cytoplasm. The enzyme catalyses CMP + ATP = CDP + ADP. It carries out the reaction dCMP + ATP = dCDP + ADP. This chain is Cytidylate kinase, found in Mycobacterium avium (strain 104).